The sequence spans 513 residues: MKLFSASVFAAIIASHYASATAHIRAPNVKPRRTNSLLTAPPQQPPLPSAQQAASASSSAGLNLTDIQGDILIGMKKNKELFFFFSITDAATFKAKLGSDILELITSTNQLLAVATQPITAVNVAFSSTGLKALGITDDLKDPVFEAGMLSNAVSDLSDPGTGNWVPGFVGTSVHGVFLLASDTIDNVNTELANIQTILNGSITEIHRLQGEARPGDQQGHEHFGFMDGISNPAVDGFTPPAEIRPGQALIPPGIMLLGEANDTFQNDRPPWAKDGSFLVFRQMQQRAPEFNKFLQDHALNMPNMTSEQGADLLGARIVGRWKSDAPIDLTPLVDDPVLAADNQRNNNFDFSDATNQTRCPFSAHIRKANPRGDLGGINKFPNQHIIRAGIPYGPEVTDAEKASNSSSTDPSLERGLAFVAYQSNIQNGFVFLQKNWVDNTNFFRPGTGVDPLIGTNSRNSGTDAPNTPRVVSGLDPNNATSTIEIGIDFVVSRGGEYFFSPSLSAIRTVLSV.

The first 20 residues, 1–20 (MKLFSASVFAAIIASHYASA), serve as a signal peptide directing secretion. Positions 21–55 (TAHIRAPNVKPRRTNSLLTAPPQQPPLPSAQQAAS) are excised as a propeptide. A disordered region spans residues 33-52 (RTNSLLTAPPQQPPLPSAQQ). The Proton acceptor role is filled by Asp-228. Heme is bound at residue His-365.

In terms of assembly, homodimer. Requires heme b as cofactor.

It localises to the secreted. The catalysed reaction is Reactive Blue 5 + 2 H2O2 = 2,2'-disulfonyl azobenzene + 3-[(4-amino-6-chloro-1,3,5-triazin-2-yl)amino]benzenesulfonate + phthalate + 2 H2O + 2 H(+). It catalyses the reaction 2 a phenolic donor + H2O2 = 2 a phenolic radical donor + 2 H2O. Functionally, manganese-independent peroxidase that is able to convert a large number of compounds, but its physiological substrate is not known. In addition to classic peroxidase substrates (e.g. 2,6-dimethoxyphenol), oxidizes dyes such as Reactive Blue 5. Also degrades beta-carotene. The polypeptide is Dye-decolorizing peroxidase msp1 (Mycetinis scorodonius (Garlic mushroom)).